We begin with the raw amino-acid sequence, 240 residues long: Putative F-box/kelch-repeat protein At2g29860 (240 aa).

The disordered stretch occupies residues 1–20 (MVLLSEIPGGSNGDDPNMNP). Positions 17 to 63 (NMNPQELPEELIESIVAPIPRCYYPSLSLLSRAFRHVITSQQLFVTR) constitute an F-box domain. Kelch repeat units follow at residues 120–165 (KIYV…VIDG) and 167–212 (IYVI…VTYA).

This chain is Putative F-box/kelch-repeat protein At2g29860, found in Arabidopsis thaliana (Mouse-ear cress).